A 141-amino-acid polypeptide reads, in one-letter code: Large ribosomal subunit protein uL11 (141 aa).

This sequence belongs to the universal ribosomal protein uL11 family. In terms of assembly, part of the ribosomal stalk of the 50S ribosomal subunit. Interacts with L10 and the large rRNA to form the base of the stalk. L10 forms an elongated spine to which L12 dimers bind in a sequential fashion forming a multimeric L10(L12)X complex. In terms of processing, one or more lysine residues are methylated.

Forms part of the ribosomal stalk which helps the ribosome interact with GTP-bound translation factors. The protein is Large ribosomal subunit protein uL11 of Synechococcus sp. (strain CC9605).